The chain runs to 56 residues: Alpha-pompilidotoxin (56 aa).

The signal sequence occupies residues 1-22 (MFKQLILLALAAVFLLINISSA). The propeptide occupies 23–42 (EPAAEPNANAEPLAEASAEP). Leucine 55 is modified (leucine amide).

Expressed by the venom gland.

The protein resides in the secreted. Functionally, inhibits sodium channels (Nav) inactivation. Shows two types of inhibitory activities on channels. Inhibition of hNav1.6/SCN8A shows a large increase in the steady-state current component without any increase in the slow component, whereas inhibition of hNav1.1/SCN1A, hNav1.2/SCN2A, hNav1.3/SCN3A and hNav1.7/SCN9A shows a large increase in the slow component with only a small steady-state component. Is 5-fold less potent than beta-PMTX for inducing repetitive action potentials in lobster neuromuscular junctions. This Anoplius samariensis (Solitary wasp) protein is Alpha-pompilidotoxin.